Consider the following 331-residue polypeptide: D-alanine--D-alanine ligase (331 aa).

Residues 112–314 enclose the ATP-grasp domain; it reads KRIWRSEGLP…YEDLCLRLLA (203 aa). ATP is bound at residue 138-193; the sequence is LQTLGAPMIVKPAREGSTIGLSKVHQAQQCASAYLLAARYDPEVLCEQFIAGDELT. 3 residues coordinate Mg(2+): Asp-267, Glu-281, and Asn-283.

The protein belongs to the D-alanine--D-alanine ligase family. Mg(2+) serves as cofactor. Requires Mn(2+) as cofactor.

It localises to the cytoplasm. The enzyme catalyses 2 D-alanine + ATP = D-alanyl-D-alanine + ADP + phosphate + H(+). Its pathway is cell wall biogenesis; peptidoglycan biosynthesis. Its function is as follows. Cell wall formation. The protein is D-alanine--D-alanine ligase of Verminephrobacter eiseniae (strain EF01-2).